A 299-amino-acid polypeptide reads, in one-letter code: Taste receptor type 2 member 5 (299 aa).

A topological domain (extracellular) is located at residue Met-1. The chain crosses the membrane as a helical span at residues 2 to 22 (LSAGLGLLMLVAVVEFLIGLI). Topologically, residues 23 to 45 (GNGVLVVWSFREWIRKFSWSSYN) are cytoplasmic. The chain crosses the membrane as a helical span at residues 46–66 (LIILGLAGCRFVLQWLIILDL). Topologically, residues 67–82 (SLFPLFQSSRWLRYLS) are extracellular. The chain crosses the membrane as a helical span at residues 83–103 (IFWVLVSQASLWFATFLSVFY). Residues 104-127 (CKKITTFDHPAYLWLKQRAYNLSL) are Cytoplasmic-facing. A helical transmembrane segment spans residues 128–148 (WCLLGYFIINLLLTVQIGLMF). Over 149-175 (YHPPQGNSSIRYPFESWQYLYAFRLNS) the chain is Extracellular. Asn-155 carries an N-linked (GlcNAc...) asparagine glycan. A helical membrane pass occupies residues 176–196 (GSYLPLMVFLVSSGMLIVSLY). Over 197–223 (THHKKMKVHSAGRRDVRAKAHITALKS) the chain is Cytoplasmic. A helical membrane pass occupies residues 224–244 (LGCFLLLHLVYIMASPFSIAS). Topologically, residues 245-253 (KTYPPDLTS) are extracellular. Residues 254-274 (VFIWETLMAAYPSLHSLILIM) traverse the membrane as a helical segment. Residues 275–299 (GIPRVKQTCQKILWKTVCARRCWGP) lie on the Cytoplasmic side of the membrane.

It belongs to the G-protein coupled receptor T2R family.

The protein resides in the membrane. Functionally, receptor that may play a role in the perception of bitterness and is gustducin-linked. May play a role in sensing the chemical composition of the gastrointestinal content. The activity of this receptor may stimulate alpha gustducin, mediate PLC-beta-2 activation and lead to the gating of TRPM5. The protein is Taste receptor type 2 member 5 (TAS2R5) of Pan paniscus (Pygmy chimpanzee).